The sequence spans 150 residues: Thyroid hormone-inducible hepatic protein (150 aa).

Residues 83–104 are disordered; sequence KVAGNETSEAENDAAETEEAEE. Ser-90 is modified (phosphoserine). Residues 90-104 are compositionally biased toward acidic residues; sequence SEAENDAAETEEAEE.

It belongs to the SPOT14 family. Homodimer. Heterodimer with MID1IP1. Interacts with THRB and PLAGL1. In terms of tissue distribution, mainly expressed in tissues that synthesize triglycerides.

It localises to the nucleus. It is found in the cytoplasm. Functionally, plays a role in the regulation of lipogenesis, especially in lactating mammary gland. Important for the biosynthesis of triglycerides with medium-length fatty acid chains. May modulate lipogenesis by interacting with MID1IP1 and preventing its interaction with ACACA. May function as transcriptional coactivator. May modulate the transcription factor activity of THRB. The protein is Thyroid hormone-inducible hepatic protein (Thrsp) of Mus musculus (Mouse).